The chain runs to 630 residues: PR domain zinc finger protein 5 (630 aa).

Positions D8 to L124 constitute an SET domain. A C2H2-type 1 zinc finger spans residues Y167 to H190. A C2H2-type 2; atypical zinc finger spans residues F199 to C221. The C2H2-type 3; atypical zinc finger occupies F234–C256. 13 consecutive C2H2-type zinc fingers follow at residues F262–H287, L295–H317, F320–H342, Y348–H370, Y376–H398, F404–H426, F432–H455, Y461–H483, K489–H511, Y517–H539, Y545–H567, F573–H595, and A602–H625.

It belongs to the class V-like SAM-binding methyltransferase superfamily. In terms of assembly, interacts with EHMT2/G9A, GFI1 and HDAC1. In terms of tissue distribution, widely expressed with highest levels in colon and ovary. Tends to be silenced in breast, colorectal, gastric and liver cancer tissues.

It is found in the nucleus. Sequence-specific DNA-binding transcription factor. Represses transcription at least in part by recruitment of the histone methyltransferase EHMT2/G9A and histone deacetylases such as HDAC1. Regulates hematopoiesis-associated protein-coding and microRNA (miRNA) genes. May regulate the expression of proteins involved in extracellular matrix development and maintenance, including fibrillar collagens, such as COL4A1 and COL11A1, connective tissue components, such as HAPLN1, and molecules regulating cell migration and adhesion, including EDIL3 and TGFB2. May cause G2/M arrest and apoptosis in cancer cells. This is PR domain zinc finger protein 5 (PRDM5) from Homo sapiens (Human).